A 254-amino-acid chain; its full sequence is UPF0246 protein CPE2152 (254 aa).

The protein belongs to the UPF0246 family.

In Clostridium perfringens (strain 13 / Type A), this protein is UPF0246 protein CPE2152.